We begin with the raw amino-acid sequence, 132 residues long: Small ribosomal subunit protein uS8 (132 aa).

The protein belongs to the universal ribosomal protein uS8 family. Part of the 30S ribosomal subunit. Contacts proteins S5 and S12.

Functionally, one of the primary rRNA binding proteins, it binds directly to 16S rRNA central domain where it helps coordinate assembly of the platform of the 30S subunit. This chain is Small ribosomal subunit protein uS8, found in Brucella melitensis biotype 1 (strain ATCC 23456 / CCUG 17765 / NCTC 10094 / 16M).